Here is a 321-residue protein sequence, read N- to C-terminus: UDP-N-acetylenolpyruvoylglucosamine reductase (321 aa).

Positions 36-203 (FRAGGLAEVM…TGALFEGYPE (168 aa)) constitute an FAD-binding PCMH-type domain. Arg183 is an active-site residue. The active-site Proton donor is the Ser232. The active site involves Glu302.

This sequence belongs to the MurB family. FAD is required as a cofactor.

Its subcellular location is the cytoplasm. The catalysed reaction is UDP-N-acetyl-alpha-D-muramate + NADP(+) = UDP-N-acetyl-3-O-(1-carboxyvinyl)-alpha-D-glucosamine + NADPH + H(+). Its pathway is cell wall biogenesis; peptidoglycan biosynthesis. In terms of biological role, cell wall formation. This Agrobacterium fabrum (strain C58 / ATCC 33970) (Agrobacterium tumefaciens (strain C58)) protein is UDP-N-acetylenolpyruvoylglucosamine reductase.